Consider the following 1404-residue polypeptide: DNA-directed RNA polymerase subunit beta' (1404 aa).

Residues Cys70, Cys72, Cys85, and Cys88 each contribute to the Zn(2+) site. Residues Asp460, Asp462, and Asp464 each contribute to the Mg(2+) site. 4 residues coordinate Zn(2+): Cys814, Cys888, Cys895, and Cys898.

This sequence belongs to the RNA polymerase beta' chain family. As to quaternary structure, the RNAP catalytic core consists of 2 alpha, 1 beta, 1 beta' and 1 omega subunit. When a sigma factor is associated with the core the holoenzyme is formed, which can initiate transcription. Requires Mg(2+) as cofactor. It depends on Zn(2+) as a cofactor.

The catalysed reaction is RNA(n) + a ribonucleoside 5'-triphosphate = RNA(n+1) + diphosphate. In terms of biological role, DNA-dependent RNA polymerase catalyzes the transcription of DNA into RNA using the four ribonucleoside triphosphates as substrates. The protein is DNA-directed RNA polymerase subunit beta' of Shewanella pealeana (strain ATCC 700345 / ANG-SQ1).